Reading from the N-terminus, the 397-residue chain is T-box transcription factor TBX19 (397 aa).

The segment at residues 48 to 216 is a DNA-binding region (T-box); it reads LWQRFREVTN…YNPFAKAFLD (169 aa). The segment at 220-248 is disordered; that stretch reads RNHPKDAPEAASEGQHMTYSHSPQAPHGC.

It is found in the nucleus. Functionally, may be involved in the initial formation of the chordamesoderm. This chain is T-box transcription factor TBX19, found in Gallus gallus (Chicken).